Consider the following 464-residue polypeptide: tRNA-2-methylthio-N(6)-dimethylallyladenosine synthase (464 aa).

Residues 5–122 enclose the MTTase N-terminal domain; the sequence is RKLYVKSFGC…LPEMLARVRD (118 aa). [4Fe-4S] cluster-binding residues include Cys14, Cys50, Cys85, Cys163, Cys167, and Cys170. The Radical SAM core domain maps to 149-383; the sequence is KKRGPTAFVT…VLEASKTAFD (235 aa). A TRAM domain is found at 384 to 446; sequence RACMGRRFDI…PNSLAGQVVD (63 aa).

It belongs to the methylthiotransferase family. MiaB subfamily. In terms of assembly, monomer. Requires [4Fe-4S] cluster as cofactor.

It is found in the cytoplasm. The enzyme catalyses N(6)-dimethylallyladenosine(37) in tRNA + (sulfur carrier)-SH + AH2 + 2 S-adenosyl-L-methionine = 2-methylsulfanyl-N(6)-dimethylallyladenosine(37) in tRNA + (sulfur carrier)-H + 5'-deoxyadenosine + L-methionine + A + S-adenosyl-L-homocysteine + 2 H(+). In terms of biological role, catalyzes the methylthiolation of N6-(dimethylallyl)adenosine (i(6)A), leading to the formation of 2-methylthio-N6-(dimethylallyl)adenosine (ms(2)i(6)A) at position 37 in tRNAs that read codons beginning with uridine. The protein is tRNA-2-methylthio-N(6)-dimethylallyladenosine synthase of Azorhizobium caulinodans (strain ATCC 43989 / DSM 5975 / JCM 20966 / LMG 6465 / NBRC 14845 / NCIMB 13405 / ORS 571).